A 606-amino-acid chain; its full sequence is Granule-bound starch synthase 1, chloroplastic/amyloplastic (606 aa).

The transit peptide at 1–76 (MSALTTSQLA…GSRRFPSVVV (76 aa)) directs the protein to the chloroplast. Positions 29 to 67 (RHGFQGLKPRSPAGGDASSLSVTTSARATPKQQRSVQRG) are disordered. Residues 46–66 (SSLSVTTSARATPKQQRSVQR) are compositionally biased toward polar residues. Residue lysine 97 participates in ADP-alpha-D-glucose binding.

Belongs to the glycosyltransferase 1 family. Bacterial/plant glycogen synthase subfamily.

The protein resides in the plastid. Its subcellular location is the chloroplast. It localises to the amyloplast. It carries out the reaction an NDP-alpha-D-glucose + [(1-&gt;4)-alpha-D-glucosyl](n) = [(1-&gt;4)-alpha-D-glucosyl](n+1) + a ribonucleoside 5'-diphosphate + H(+). The protein operates within glycan biosynthesis; starch biosynthesis. Required for the synthesis of amylose in endosperm. The protein is Granule-bound starch synthase 1, chloroplastic/amyloplastic (WAXY) of Oryza sativa (Rice).